Here is a 200-residue protein sequence, read N- to C-terminus: Casparian strip membrane protein 1 (200 aa).

Topologically, residues 1–38 are cytoplasmic; the sequence is MKSGDHAAIDVPESSAVAKGKAPLIATPREQKSGFKKG. The helical transmembrane segment at 39–59 threads the bilayer; the sequence is LGIFDFLLRLGAIIAALAAAA. Residues 60–86 lie on the Extracellular side of the membrane; it reads TMGTSDETLPFFTQFFQFEASYDDLPT. Residues 87–107 form a helical membrane-spanning segment; that stretch reads FMFFVIAMALIGGYLVLSLPF. Residues 108–121 are Cytoplasmic-facing; that stretch reads SIVTIVRPHAVAPR. The chain crosses the membrane as a helical span at residues 122–142; that stretch reads LLLFILDIVALTLTTAAGAAA. Topologically, residues 143 to 171 are extracellular; sequence AAIVYLAHNGNPNTNWLAICQQFGDFCQE. Residues 172–192 traverse the membrane as a helical segment; sequence VSGAVVASFVTVVVLMSLVLL. Residues 193–200 are Cytoplasmic-facing; sequence SGVALKKH.

It belongs to the Casparian strip membrane proteins (CASP) family. As to quaternary structure, homodimer and heterodimers.

It localises to the cell membrane. Regulates membrane-cell wall junctions and localized cell wall deposition. Required for establishment of the Casparian strip membrane domain (CSD) and the subsequent formation of Casparian strips, a cell wall modification of the root endodermis that determines an apoplastic barrier between the intraorganismal apoplasm and the extraorganismal apoplasm and prevents lateral diffusion. This is Casparian strip membrane protein 1 from Theobroma cacao (Cacao).